The following is a 43-amino-acid chain: METATLVXISISGSLVSFTGYALYTAFGQPSQQLRDPFEEHGD.

Residues 5-27 (TLVXISISGSLVSFTGYALYTAF) traverse the membrane as a helical segment.

The protein belongs to the PsbN family.

It localises to the plastid. It is found in the chloroplast thylakoid membrane. May play a role in photosystem I and II biogenesis. In Calycanthus floridus (Eastern sweetshrub), this protein is Protein PsbN.